Here is a 612-residue protein sequence, read N- to C-terminus: Elongation factor 4 (612 aa).

A tr-type G domain is found at 11–193 (KHIRNFSIVA…EIVKKVPAPD (183 aa)). Residues 23–28 (DHGKST) and 140–143 (NKID) each bind GTP.

This sequence belongs to the TRAFAC class translation factor GTPase superfamily. Classic translation factor GTPase family. LepA subfamily.

The protein localises to the cell membrane. It carries out the reaction GTP + H2O = GDP + phosphate + H(+). Functionally, required for accurate and efficient protein synthesis under certain stress conditions. May act as a fidelity factor of the translation reaction, by catalyzing a one-codon backward translocation of tRNAs on improperly translocated ribosomes. Back-translocation proceeds from a post-translocation (POST) complex to a pre-translocation (PRE) complex, thus giving elongation factor G a second chance to translocate the tRNAs correctly. Binds to ribosomes in a GTP-dependent manner. In Lactobacillus johnsonii (strain CNCM I-12250 / La1 / NCC 533), this protein is Elongation factor 4.